A 188-amino-acid polypeptide reads, in one-letter code: Peptidyl-tRNA hydrolase (188 aa).

TRNA is bound at residue Y14. H19 functions as the Proton acceptor in the catalytic mechanism. TRNA-binding residues include Y64, N66, and N112.

It belongs to the PTH family. As to quaternary structure, monomer.

The protein localises to the cytoplasm. The enzyme catalyses an N-acyl-L-alpha-aminoacyl-tRNA + H2O = an N-acyl-L-amino acid + a tRNA + H(+). Functionally, hydrolyzes ribosome-free peptidyl-tRNAs (with 1 or more amino acids incorporated), which drop off the ribosome during protein synthesis, or as a result of ribosome stalling. Catalyzes the release of premature peptidyl moieties from peptidyl-tRNA molecules trapped in stalled 50S ribosomal subunits, and thus maintains levels of free tRNAs and 50S ribosomes. This Clostridium novyi (strain NT) protein is Peptidyl-tRNA hydrolase.